A 142-amino-acid chain; its full sequence is Large ribosomal subunit protein uL11 (142 aa).

This sequence belongs to the universal ribosomal protein uL11 family. Part of the ribosomal stalk of the 50S ribosomal subunit. Interacts with L10 and the large rRNA to form the base of the stalk. L10 forms an elongated spine to which L12 dimers bind in a sequential fashion forming a multimeric L10(L12)X complex. One or more lysine residues are methylated.

Functionally, forms part of the ribosomal stalk which helps the ribosome interact with GTP-bound translation factors. The polypeptide is Large ribosomal subunit protein uL11 (Shigella boydii serotype 18 (strain CDC 3083-94 / BS512)).